Consider the following 355-residue polypeptide: Probable dual-specificity RNA methyltransferase RlmN (355 aa).

Glu92 functions as the Proton acceptor in the catalytic mechanism. Residues 98–330 (FHYGLSVCVT…TELGINCGVR (233 aa)) enclose the Radical SAM core domain. A disulfide bridge links Cys105 with Cys341. [4Fe-4S] cluster is bound by residues Cys112, Cys116, and Cys119. Residues 164–165 (GE), Ser196, 219–221 (SLH), and Asn297 each bind S-adenosyl-L-methionine. Cys341 acts as the S-methylcysteine intermediate in catalysis.

It belongs to the radical SAM superfamily. RlmN family. The cofactor is [4Fe-4S] cluster.

Its subcellular location is the cytoplasm. It carries out the reaction adenosine(2503) in 23S rRNA + 2 reduced [2Fe-2S]-[ferredoxin] + 2 S-adenosyl-L-methionine = 2-methyladenosine(2503) in 23S rRNA + 5'-deoxyadenosine + L-methionine + 2 oxidized [2Fe-2S]-[ferredoxin] + S-adenosyl-L-homocysteine. The catalysed reaction is adenosine(37) in tRNA + 2 reduced [2Fe-2S]-[ferredoxin] + 2 S-adenosyl-L-methionine = 2-methyladenosine(37) in tRNA + 5'-deoxyadenosine + L-methionine + 2 oxidized [2Fe-2S]-[ferredoxin] + S-adenosyl-L-homocysteine. In terms of biological role, specifically methylates position 2 of adenine 2503 in 23S rRNA and position 2 of adenine 37 in tRNAs. This chain is Probable dual-specificity RNA methyltransferase RlmN, found in Oceanobacillus iheyensis (strain DSM 14371 / CIP 107618 / JCM 11309 / KCTC 3954 / HTE831).